Reading from the N-terminus, the 329-residue chain is Biotin synthase (329 aa).

The region spanning 46 to 275 (FFGRRLKLVR…LNPKAELRAS (230 aa)) is the Radical SAM core domain. The [4Fe-4S] cluster site is built by C64, C68, and C71. Residues C108, C140, C200, and R273 each contribute to the [2Fe-2S] cluster site.

This sequence belongs to the radical SAM superfamily. Biotin synthase family. In terms of assembly, homodimer. Requires [4Fe-4S] cluster as cofactor. [2Fe-2S] cluster is required as a cofactor.

The enzyme catalyses (4R,5S)-dethiobiotin + (sulfur carrier)-SH + 2 reduced [2Fe-2S]-[ferredoxin] + 2 S-adenosyl-L-methionine = (sulfur carrier)-H + biotin + 2 5'-deoxyadenosine + 2 L-methionine + 2 oxidized [2Fe-2S]-[ferredoxin]. It functions in the pathway cofactor biosynthesis; biotin biosynthesis; biotin from 7,8-diaminononanoate: step 2/2. Catalyzes the conversion of dethiobiotin (DTB) to biotin by the insertion of a sulfur atom into dethiobiotin via a radical-based mechanism. The polypeptide is Biotin synthase (Thermus thermophilus (strain ATCC 27634 / DSM 579 / HB8)).